A 265-amino-acid chain; its full sequence is Ribosomal RNA small subunit methyltransferase A (265 aa).

S-adenosyl-L-methionine is bound by residues His-11, Leu-13, Gly-38, Glu-59, Asp-83, and Asn-100.

It belongs to the class I-like SAM-binding methyltransferase superfamily. rRNA adenine N(6)-methyltransferase family. RsmA subfamily.

Its subcellular location is the cytoplasm. The enzyme catalyses adenosine(1518)/adenosine(1519) in 16S rRNA + 4 S-adenosyl-L-methionine = N(6)-dimethyladenosine(1518)/N(6)-dimethyladenosine(1519) in 16S rRNA + 4 S-adenosyl-L-homocysteine + 4 H(+). Its function is as follows. Specifically dimethylates two adjacent adenosines (A1518 and A1519) in the loop of a conserved hairpin near the 3'-end of 16S rRNA in the 30S particle. May play a critical role in biogenesis of 30S subunits. The protein is Ribosomal RNA small subunit methyltransferase A of Thermosynechococcus vestitus (strain NIES-2133 / IAM M-273 / BP-1).